The sequence spans 357 residues: F-box only protein 25 (357 aa).

The segment at 1–83 (MPFLGQDWRS…DTAAHSFYRE (83 aa)) is interaction with beta-actin. In terms of domain architecture, F-box spans 224 to 271 (GLTLSDLPLHMLNNILYRFSDGWDIVTLGQVTPTLYMLSEDRRLWKRL).

In terms of assembly, part of a SCF (SKP1-cullin-F-box) protein ligase complex consisting of FBXO25, SKP1, CUL1 and RBX1. Interacts directly with SKP1 and CUL1. Interacts (via C-terminus) with actin (via N-terminus).

Its subcellular location is the nucleus. It functions in the pathway protein modification; protein ubiquitination. Substrate-recognition component of the SCF (SKP1-CUL1-F-box protein)-type E3 ubiquitin ligase complex. May play a role in accumulation of expanded polyglutamine (polyQ) protein huntingtin (HTT). This is F-box only protein 25 (Fbxo25) from Rattus norvegicus (Rat).